Reading from the N-terminus, the 506-residue chain is uncharacterized protein (506 aa).

Belongs to the Mg-chelatase subunits D/I family. ComM subfamily.

This is an uncharacterized protein from Salmonella typhimurium (strain LT2 / SGSC1412 / ATCC 700720).